The chain runs to 766 residues: Phosphoribosylformylglycinamidine synthase subunit PurL (766 aa).

His-66 is an active-site residue. ATP-binding residues include Tyr-69 and Lys-113. Glu-115 lines the Mg(2+) pocket. Substrate contacts are provided by residues 116–119 (SHNH) and Arg-138. His-117 functions as the Proton acceptor in the catalytic mechanism. Residue Asp-139 participates in Mg(2+) binding. A substrate-binding site is contributed by Gln-264. Asp-292 contacts Mg(2+). 336-338 (ESQ) contacts substrate. Residues Asn-524 and Gly-561 each coordinate ATP. Asn-562 provides a ligand contact to Mg(2+). Ser-564 lines the substrate pocket.

This sequence belongs to the FGAMS family. In terms of assembly, monomer. Part of the FGAM synthase complex composed of 1 PurL, 1 PurQ and 2 PurS subunits.

The protein localises to the cytoplasm. It carries out the reaction N(2)-formyl-N(1)-(5-phospho-beta-D-ribosyl)glycinamide + L-glutamine + ATP + H2O = 2-formamido-N(1)-(5-O-phospho-beta-D-ribosyl)acetamidine + L-glutamate + ADP + phosphate + H(+). It participates in purine metabolism; IMP biosynthesis via de novo pathway; 5-amino-1-(5-phospho-D-ribosyl)imidazole from N(2)-formyl-N(1)-(5-phospho-D-ribosyl)glycinamide: step 1/2. Its function is as follows. Part of the phosphoribosylformylglycinamidine synthase complex involved in the purines biosynthetic pathway. Catalyzes the ATP-dependent conversion of formylglycinamide ribonucleotide (FGAR) and glutamine to yield formylglycinamidine ribonucleotide (FGAM) and glutamate. The FGAM synthase complex is composed of three subunits. PurQ produces an ammonia molecule by converting glutamine to glutamate. PurL transfers the ammonia molecule to FGAR to form FGAM in an ATP-dependent manner. PurS interacts with PurQ and PurL and is thought to assist in the transfer of the ammonia molecule from PurQ to PurL. In Mycobacterium tuberculosis (strain CDC 1551 / Oshkosh), this protein is Phosphoribosylformylglycinamidine synthase subunit PurL.